A 439-amino-acid polypeptide reads, in one-letter code: MTTPATPTRQTLLDAYFGEYGGQFVPEVLLPALDELERAYVEALEDPTFQQELDDLYTNYLGRPTPITECANLPLEGQGRGTARIFLKREDLVHGGAHKGNQTIGQALLAKRLGKTRLIAETGAGQHGTATAMVAALFGMKCTVYMGAKDVARQQPNVYRMRLMGAEVVAVDEQSGNGLSSAIDVAINDWVNNLEDTHYLLGTAAGPHPFPTLVKKFHSVISRESREQMLERTGALPDAVVACVGGGSNAIGAFAQYLEDQPGNEKVRLIGVEPAGYGLDTDLNGAPIHEGRTMHLHGSNSYALLDEDGNLRNSHSVSAGLDYPGVGPEHAHLKDTGRAEYVGATDAEALQAFRMLSRYEGIIPALESSHALAHALKMAAEATEPINILVNLSGRGDKDVAYVRQLLGDHAALDPATDVLTEVDVLGVLEELTPQADTA.

Residue lysine 99 is modified to N6-(pyridoxal phosphate)lysine.

It belongs to the TrpB family. As to quaternary structure, tetramer of two alpha and two beta chains. Pyridoxal 5'-phosphate serves as cofactor.

It catalyses the reaction (1S,2R)-1-C-(indol-3-yl)glycerol 3-phosphate + L-serine = D-glyceraldehyde 3-phosphate + L-tryptophan + H2O. It functions in the pathway amino-acid biosynthesis; L-tryptophan biosynthesis; L-tryptophan from chorismate: step 5/5. In terms of biological role, the beta subunit is responsible for the synthesis of L-tryptophan from indole and L-serine. This chain is Tryptophan synthase beta chain 2 (trpB2), found in Corynebacterium efficiens (strain DSM 44549 / YS-314 / AJ 12310 / JCM 11189 / NBRC 100395).